The sequence spans 100 residues: NADH-quinone oxidoreductase subunit K (100 aa).

A run of 3 helical transmembrane segments spans residues 2-22 (ITLSHYLVVAALMFVLGLIGI), 29-49 (IMLFFSSEILLNAANVALAAI), and 63-83 (LFIVAVAASEVAVGLGLLILW).

The protein belongs to the complex I subunit 4L family. In terms of assembly, NDH-1 is composed of 14 different subunits. Subunits NuoA, H, J, K, L, M, N constitute the membrane sector of the complex.

The protein localises to the cell inner membrane. The enzyme catalyses a quinone + NADH + 5 H(+)(in) = a quinol + NAD(+) + 4 H(+)(out). Its function is as follows. NDH-1 shuttles electrons from NADH, via FMN and iron-sulfur (Fe-S) centers, to quinones in the respiratory chain. The immediate electron acceptor for the enzyme in this species is believed to be ubiquinone. Couples the redox reaction to proton translocation (for every two electrons transferred, four hydrogen ions are translocated across the cytoplasmic membrane), and thus conserves the redox energy in a proton gradient. This chain is NADH-quinone oxidoreductase subunit K, found in Campylobacter curvus (strain 525.92).